Here is a 661-residue protein sequence, read N- to C-terminus: Junctophilin-1 (661 aa).

The Cytoplasmic portion of the chain corresponds to 1-639 (MTGGRFDFDD…EKEANSGPNS (639 aa)). MORN repeat units lie at residues 14-36 (YCGGWEEGKAHGHGICTGPKGQG), 38-59 (YSGSWSHGFEVVGGYTWPSGNT), 60-82 (YQGYWAQGKRHGLGVETKGKWMY), 106-128 (YEGTWSNGLQDGYGVETYGDGGT), and 129-151 (YQGQWAGGMRHGYGVRQSVPYGM). Phosphoserine occurs at positions 157, 216, and 220. The interval 228 to 247 (SKSSISSKRSSVRSDAAMSR) is disordered. MORN repeat units follow at residues 281–303 (YMGEWKNDKRNGFGVSERSNGMK) and 304–326 (YEGEWANNKRHGYGCTVFPDGSK). The segment covering 433–454 (DAKENPEEKVPEKPPTPKESPH) has biased composition (basic and acidic residues). The segment at 433 to 631 (DAKENPEEKV…SNDSCPALEK (199 aa)) is disordered. Residue Thr-448 is modified to Phosphothreonine. Ser-452 bears the Phosphoserine mark. Thr-461 bears the Phosphothreonine mark. Residues Ser-465, Ser-469, and Ser-475 each carry the phosphoserine modification. A compositionally biased stretch (basic and acidic residues) spans 599–613 (VAKESKAEPKAKKSE). The helical; Anchor for type IV membrane protein transmembrane segment at 640 to 660 (IMIVLVMLLNIGLAILFVHFL) threads the bilayer.

This sequence belongs to the junctophilin family. Abundantly expressed in skeletal muscle. Very low levels in heart.

The protein resides in the cell membrane. It localises to the endoplasmic reticulum membrane. Its subcellular location is the sarcoplasmic reticulum membrane. Junctophilins contribute to the formation of junctional membrane complexes (JMCs) which link the plasma membrane with the endoplasmic or sarcoplasmic reticulum in excitable cells. Provides a structural foundation for functional cross-talk between the cell surface and intracellular calcium release channels. JPH1 contributes to the construction of the skeletal muscle triad by linking the t-tubule (transverse-tubule) and SR (sarcoplasmic reticulum) membranes. This is Junctophilin-1 (JPH1) from Homo sapiens (Human).